Reading from the N-terminus, the 376-residue chain is Probable ribonucleoside-diphosphate reductase small subunit 048L (376 aa).

Residues Asp110, Glu140, and His143 each coordinate Fe cation. Residue Tyr147 is part of the active site. Residues Glu217, Glu251, and His254 each coordinate Fe cation.

It belongs to the ribonucleoside diphosphate reductase small chain family. In terms of assembly, heterotetramer composed of a homodimer of the large subunit (R1) and a homodimer of the small subunit (R2). Larger multisubunit protein complex are also active, composed of (R1)n(R2)n. Requires Fe cation as cofactor.

The catalysed reaction is a 2'-deoxyribonucleoside 5'-diphosphate + [thioredoxin]-disulfide + H2O = a ribonucleoside 5'-diphosphate + [thioredoxin]-dithiol. In terms of biological role, ribonucleoside-diphosphate reductase holoenzyme provides the precursors necessary for viral DNA synthesis. Allows virus growth in non-dividing cells. Catalyzes the biosynthesis of deoxyribonucleotides from the corresponding ribonucleotides. The sequence is that of Probable ribonucleoside-diphosphate reductase small subunit 048L from Invertebrate iridescent virus 3 (IIV-3).